The primary structure comprises 104 residues: MAGRAKKKCPWNDSCKTTIKIWPDVRMMLGGWLIACASNKPDPKTWCSSPPSAVLKLPILISSPAASSHPRKRGKEKKERTPTERLAAPARKKQCSAYLAIATG.

Positions S62–K92 are disordered.

This is an uncharacterized protein from Human adenovirus B serotype 7 (HAdV-7).